The following is a 24-amino-acid chain: THPSVLPFIKQLIGTMDSVRGLPR.

This is Unknown protein 3 from Pseudotsuga menziesii (Douglas-fir).